Here is a 255-residue protein sequence, read N- to C-terminus: Cobalt-precorrin-6A reductase (255 aa).

Belongs to the precorrin-6x reductase family.

It catalyses the reaction Co-precorrin-6B + NAD(+) = Co-precorrin-6A + NADH + H(+). It functions in the pathway cofactor biosynthesis; adenosylcobalamin biosynthesis; cob(II)yrinate a,c-diamide from sirohydrochlorin (anaerobic route): step 7/10. In terms of biological role, catalyzes the reduction of the macrocycle of cobalt-precorrin-6A to cobalt-precorrin-6B. The chain is Cobalt-precorrin-6A reductase (cbiJ) from Priestia megaterium (Bacillus megaterium).